The following is a 296-amino-acid chain: Putative S-adenosyl-L-methionine-dependent methyltransferase MAV_4764 (296 aa).

Residues D121 and D150–L151 each bind S-adenosyl-L-methionine.

It belongs to the UPF0677 family.

In terms of biological role, exhibits S-adenosyl-L-methionine-dependent methyltransferase activity. This chain is Putative S-adenosyl-L-methionine-dependent methyltransferase MAV_4764, found in Mycobacterium avium (strain 104).